A 136-amino-acid chain; its full sequence is Classical arabinogalactan protein 11 (136 aa).

The N-terminal stretch at 1–20 (MARLFVVVALLALAVGTVFA) is a signal peptide. Composition is skewed to low complexity over residues 24 to 56 (PSAA…ASSP), 68 to 81 (SAAS…APTV), and 89 to 107 (PEAD…PAAA). A disordered region spans residues 24-115 (PSAAPTASPT…AAESPKSGAT (92 aa)). A lipid anchor (GPI-anchor amidated serine) is attached at Ser-112. Residues 113 to 136 (GATTNVKLSIAGTVAAAGFFIFSL) constitute a propeptide, removed in mature form.

Belongs to the classical AGP family. In terms of processing, O-glycosylated on the hydroxyproline residues.

It is found in the cell membrane. Its function is as follows. Proteoglycan that seems to be implicated in diverse developmental roles such as differentiation, cell-cell recognition, embryogenesis and programmed cell death. This is Classical arabinogalactan protein 11 (AGP11) from Arabidopsis thaliana (Mouse-ear cress).